Here is a 446-residue protein sequence, read N- to C-terminus: Zinc finger protein BALDIBIS (446 aa).

Residues 20–53 (EHIAPNPNPNPNPTSSNSAKRKRNLPGNPDPDAE) are disordered. Phosphoserine is present on Ser58. 2 C2H2-type zinc fingers span residues 68 to 90 (FICEVCNKGFKRDQNLQLHRRGH) and 110 to 140 (YICPEKTCVHHDPARALGDLTGIKKHFSRKH). Positions 132 to 139 (IKKHFSRK) match the Nuclear localization signal motif. The C2H2-type 2; degenerate zinc finger occupies 145 to 168 (WKCDKCSKKYAVMSDWKAHSKICG). 8 residues coordinate Zn(2+): Cys147, Cys150, His163, Cys167, Cys174, Cys176, His189, and Cys193. The CCHC-type 2; atypical zinc finger occupies 172-195 (YRCDCGTLFSRKDSFITHRAFCDA). Residues 182 to 194 (RKDSFITHRAFCD) are SHR-binding. Positions 425–446 (HNLPDSSPPASTDGTPTADMNQ) are disordered. Residues 427-446 (LPDSSPPASTDGTPTADMNQ) show a composition bias toward polar residues.

Binds to RGA and SCL3 competitively in the nucleus. Expressed in roots, especially in vascular initials, cortex, endodermis, and quiescent center (QC).

The protein localises to the nucleus. Transcription factor that, together with JKD, regulates tissue boundaries and asymmetric cell division in roots by a rapid up-regulation of 'SCARECROW' (SCR), thus controlling the nuclear localization of 'SHORT-ROOT' (SHR) and restricting its action. Confines CYCD6 expression to the cortex-endodermis initial/daughter (CEI/CEID) tissues. Binds DNA via its zinc fingers. Recognizes and binds to SCL3 promoter sequence 5'-AGACAA-3' to promote its expression when in complex with RGA. The chain is Zinc finger protein BALDIBIS from Arabidopsis thaliana (Mouse-ear cress).